A 344-amino-acid chain; its full sequence is Fructose-bisphosphate aldolase (344 aa).

Residue Ser-53 coordinates D-glyceraldehyde 3-phosphate. Residue Asp-95 is the Proton donor of the active site. Residues His-96, Asp-131, Glu-161, and His-212 each contribute to the Zn(2+) site. Gly-213 serves as a coordination point for dihydroxyacetone phosphate. Residue His-252 participates in Zn(2+) binding. Residues 253-255 (GGS) and 274-277 (NVDT) each bind dihydroxyacetone phosphate.

The protein belongs to the class II fructose-bisphosphate aldolase family. The cofactor is Zn(2+).

It carries out the reaction beta-D-fructose 1,6-bisphosphate = D-glyceraldehyde 3-phosphate + dihydroxyacetone phosphate. It participates in carbohydrate degradation; glycolysis; D-glyceraldehyde 3-phosphate and glycerone phosphate from D-glucose: step 4/4. Functionally, catalyzes the aldol condensation of dihydroxyacetone phosphate (DHAP or glycerone-phosphate) with glyceraldehyde 3-phosphate (G3P) to form fructose 1,6-bisphosphate (FBP) in gluconeogenesis and the reverse reaction in glycolysis. The polypeptide is Fructose-bisphosphate aldolase (fba) (Corynebacterium glutamicum (strain ATCC 13032 / DSM 20300 / JCM 1318 / BCRC 11384 / CCUG 27702 / LMG 3730 / NBRC 12168 / NCIMB 10025 / NRRL B-2784 / 534)).